The sequence spans 219 residues: ATP-dependent Clp protease proteolytic subunit 1, mitochondrial (219 aa).

Residues 1-23 constitute a mitochondrion transit peptide; that stretch reads MLRRILTTSSVRNLTSSTQARVG. Serine 118 acts as the Nucleophile in catalysis. Histidine 143 is a catalytic residue.

Belongs to the peptidase S14 family. Tetradecamer that assembles into a two heptameric rings with a central cavity.

The protein resides in the mitochondrion matrix. The enzyme catalyses Hydrolysis of proteins to small peptides in the presence of ATP and magnesium. alpha-casein is the usual test substrate. In the absence of ATP, only oligopeptides shorter than five residues are hydrolyzed (such as succinyl-Leu-Tyr-|-NHMec, and Leu-Tyr-Leu-|-Tyr-Trp, in which cleavage of the -Tyr-|-Leu- and -Tyr-|-Trp bonds also occurs).. Clp cleaves peptides in various proteins in a process that requires ATP hydrolysis. Clp may be responsible for a fairly general and central housekeeping function rather than for the degradation of specific substrates. The chain is ATP-dependent Clp protease proteolytic subunit 1, mitochondrial from Caenorhabditis briggsae.